The chain runs to 142 residues: Transcriptional regulator MraZ (142 aa).

2 consecutive SpoVT-AbrB domains span residues Ala5–Val51 and Ala77–Arg120.

The protein belongs to the MraZ family. As to quaternary structure, forms oligomers.

The protein localises to the cytoplasm. The protein resides in the nucleoid. The protein is Transcriptional regulator MraZ of Herminiimonas arsenicoxydans.